Reading from the N-terminus, the 263-residue chain is UPF0758 protein NGR_c13970 (263 aa).

The MPN domain occupies 141–263; it reads VLSSWSAVID…HVSMKGLRLF (123 aa). Residues histidine 212, histidine 214, and aspartate 225 each coordinate Zn(2+). The short motif at 212 to 225 is the JAMM motif element; it reads HNHPSGDPTPSRAD.

It belongs to the UPF0758 family.

The sequence is that of UPF0758 protein NGR_c13970 from Sinorhizobium fredii (strain NBRC 101917 / NGR234).